Here is a 236-residue protein sequence, read N- to C-terminus: UPF0257 lipoprotein YnfC (236 aa).

Positions 1–16 (MKYKLLPCLLAIFLTG) are cleaved as a signal peptide. Cys17 carries the N-palmitoyl cysteine lipid modification. Cys17 carries S-diacylglycerol cysteine lipidation.

This sequence belongs to the UPF0257 family.

It is found in the cell membrane. The sequence is that of UPF0257 lipoprotein YnfC (ynfC) from Shigella flexneri.